The sequence spans 221 residues: Epididymal secretory glutathione peroxidase (221 aa).

Residues 1–21 (MAIQLRVFYLVPLLLASYVQT) form the signal peptide. The active site involves C73.

The protein belongs to the glutathione peroxidase family. Epididymis.

Its subcellular location is the secreted. It catalyses the reaction 2 glutathione + H2O2 = glutathione disulfide + 2 H2O. In terms of biological role, protects cells and enzymes from oxidative damage, by catalyzing the reduction of hydrogen peroxide, lipid peroxides and organic hydroperoxide, by glutathione. May constitute a glutathione peroxidase-like protective system against peroxide damage in sperm membrane lipids. The protein is Epididymal secretory glutathione peroxidase (Gpx5) of Rattus norvegicus (Rat).